The chain runs to 171 residues: Translationally-controlled tumor protein homolog (171 aa).

The TCTP domain maps to 1–171 (MIIYKDIITG…FKDGLEIEKC (171 aa)).

It belongs to the TCTP family.

The protein localises to the cytoplasm. In terms of biological role, involved in calcium binding and microtubule stabilization. The sequence is that of Translationally-controlled tumor protein homolog (tpt1) from Labeo rohita (Indian major carp).